The sequence spans 209 residues: Octanoyltransferase (209 aa).

Positions 29–209 (GSGDELVWML…KKSFVKIFGE (181 aa)) constitute a BPL/LPL catalytic domain. Substrate-binding positions include 68–75 (RGGKYTYH), 141–143 (AIG), and 154–156 (GIA). Cys172 functions as the Acyl-thioester intermediate in the catalytic mechanism.

This sequence belongs to the LipB family.

It is found in the cytoplasm. It catalyses the reaction octanoyl-[ACP] + L-lysyl-[protein] = N(6)-octanoyl-L-lysyl-[protein] + holo-[ACP] + H(+). Its pathway is protein modification; protein lipoylation via endogenous pathway; protein N(6)-(lipoyl)lysine from octanoyl-[acyl-carrier-protein]: step 1/2. Functionally, catalyzes the transfer of endogenously produced octanoic acid from octanoyl-acyl-carrier-protein onto the lipoyl domains of lipoate-dependent enzymes. Lipoyl-ACP can also act as a substrate although octanoyl-ACP is likely to be the physiological substrate. This chain is Octanoyltransferase, found in Neorickettsia sennetsu (strain ATCC VR-367 / Miyayama) (Ehrlichia sennetsu).